The chain runs to 342 residues: MAVTAAQVKELREKTGAGIMDAKRALVETDGNMEAAAELLREKGIAKAAKKADRVAAEGLTGIAVNGNVAALVELNSETDFVAKNDQFVALVKETAELLAASKPANNEEALAIKTASGVTLEQELVQATATIGEKITFRRFVVIEKTDAQHFGAYQHNGGKIGVISVIEGADETLAKQVSMHIAAMNPTVLSADELDSEFVKAELAQMNHKIDEDNASRVLVNKPELPHHEYGSKSQLTEEVLAAAKASFEEELKAEGKPEKIWDKILPGKMAKFIVDNTKVDQQFALLAQLYIMDDSKTVEAFLESKGAKAIAFTRFEVGEGIEKAETDFAAEVEAAKAGL.

Positions 79 to 82 are involved in Mg(2+) ion dislocation from EF-Tu; it reads TDFV.

It belongs to the EF-Ts family.

The protein resides in the cytoplasm. Its function is as follows. Associates with the EF-Tu.GDP complex and induces the exchange of GDP to GTP. It remains bound to the aminoacyl-tRNA.EF-Tu.GTP complex up to the GTP hydrolysis stage on the ribosome. This chain is Elongation factor Ts, found in Lactococcus lactis subsp. cremoris (strain MG1363).